The chain runs to 175 residues: Gamma-crystallin B (175 aa).

2 Beta/gamma crystallin 'Greek key' domains span residues 2 to 40 (GKIT…RVES) and 41 to 83 (GCWM…CLIP). Positions 84-88 (PHSGA) are connecting peptide. 2 Beta/gamma crystallin 'Greek key' domains span residues 89-129 (YRMK…NVLE) and 130-172 (GSWI…RRVM).

The protein belongs to the beta/gamma-crystallin family. Monomer.

Its function is as follows. Crystallins are the dominant structural components of the vertebrate eye lens. This is Gamma-crystallin B (CRYGB) from Homo sapiens (Human).